The chain runs to 70 residues: Kunitz-type serine protease inhibitor BmKTT-3 (70 aa).

The BPTI/Kunitz inhibitor domain maps to 7–57; it reads CRLPPERGPCRGNITKYYYHNESRTCRTFSYGGCEGNSNNFRNRHYCMKYC. Cystine bridges form between Cys-7–Cys-57, Cys-16–Cys-40, and Cys-32–Cys-53.

It belongs to the venom Kunitz-type family. Scorpion delta-Ktx subfamily. Delta-Ktx 1 sub-subfamily. As to expression, expressed by the venom gland.

The protein resides in the secreted. In terms of biological role, serine protease inhibitor that inhibits 85% of the activity of trypsin at a molar ratio of 4:1 (Ki=760 nM). The sequence is that of Kunitz-type serine protease inhibitor BmKTT-3 from Olivierus martensii (Manchurian scorpion).